The primary structure comprises 707 residues: MPRENQKRGRRAAEKAEKDAAKRKREEVPEDSLPKRLKPSTDESTEINQGADYIPFDENYNENYDGNYDENQADAPAGDMPFYGLLDPEEQEYFSRANEVLELNQFQDAEERRIFIDSVYKEANGKELKIACSQGCSRLMEKLISMSDMRQIHRLFNKFIGHFMNLVQHRFASHCCETLFINAAPGVTQKVSKSKSDKMDVDEEEGEEPEPELSLAEMFIKVVEELEGNWGYLLTERFASHTIRVLLLVLAGEPVDVSANDSVVASRKKEKLGLPQGETQDGDVSAQKRSVPDVFEATLKKIMKDIVSVLDDTYLRALATHPVGNPVLQVLVSLELSHFGKSSAKDPNSITRRLIPDESFEEGSETTTFVRGLLYDPVGSRLLETIVRCMPGKAFKGLYKNFIRDQITSLARNITAGYVVLRVLERLGKDDLQNALERIVPQVPSLLERSRMVVPKVLIERCLVRGVDTAPLARALEEAYDKDPARRLEQILRLESTTQEDLEESEQKPKGANAAPSQSSTGEKLHGSLLAQTMLTAPGPISGLIYSSLLAQSSESLVKIAKDPTASRVLQQALTVPTSSAQFRRQFAPRFTSHLKELALDSSGSHVVDALWPATKDIFFIKERMAQELTQHEMALRDSFVGRAVWRNWAMDLYKRRRGEWAMKAKGIDNNNGSGERPKSRIELARAKFAAKAEEDAKKGAQKGVTA.

A compositionally biased stretch (basic and acidic residues) spans 1–27 (MPRENQKRGRRAAEKAEKDAAKRKREE). The interval 1–77 (MPRENQKRGR…YDENQADAPA (77 aa)) is disordered. Low complexity predominate over residues 57–66 (DENYNENYDG). 2 Pumilio repeats span residues 122–157 (EANG…RLFN) and 158–193 (KFIG…KVSK). The segment at 268–287 (KKEKLGLPQGETQDGDVSAQ) is disordered. Pumilio repeat units lie at residues 365 to 400 (ETTT…GLYK) and 401 to 437 (NFIR…NALE). Residues 497 to 523 (TTQEDLEESEQKPKGANAAPSQSSTGE) form a disordered region. Pumilio repeat units follow at residues 548–588 (SLLA…RQFA) and 590–627 (RFTS…RMAQ).

The protein belongs to the NOP9 family.

It is found in the nucleus. The protein resides in the nucleolus. In terms of biological role, RNA-binding nucleolar protein required for pre-rRNA processing. Involved in production of 18S rRNA and assembly of small ribosomal subunit. The polypeptide is Nucleolar protein 9 (nop9) (Aspergillus oryzae (strain ATCC 42149 / RIB 40) (Yellow koji mold)).